The following is a 353-amino-acid chain: Purine nucleoside phosphorylase (353 aa).

Residues 1–16 (MSKFSYLQNGKASTNG) are compositionally biased toward polar residues. Residues 1-42 (MSKFSYLQNGKASTNGVPHANGHHQQHQNGHSNGVARNGGTA) form a disordered region. Phosphate-binding positions include S98, H129, 149–151 (RFH), and A181. A purine D-ribonucleoside is bound at residue E266. S285 lines the phosphate pocket. Position 308 (N308) interacts with a purine D-ribonucleoside.

It belongs to the PNP/MTAP phosphorylase family. As to quaternary structure, homotrimer.

It catalyses the reaction inosine + phosphate = alpha-D-ribose 1-phosphate + hypoxanthine. It carries out the reaction guanosine + phosphate = alpha-D-ribose 1-phosphate + guanine. The catalysed reaction is 2'-deoxyguanosine + phosphate = 2-deoxy-alpha-D-ribose 1-phosphate + guanine. The enzyme catalyses 2'-deoxyinosine + phosphate = 2-deoxy-alpha-D-ribose 1-phosphate + hypoxanthine. The protein operates within purine metabolism; purine nucleoside salvage. With respect to regulation, inhibited by 5'-deaza-1'-aza-2c-deoxy-1'-(9-methylene) immucillin-H (DADMe-ImmH). Its function is as follows. As part of the purine salvage pathway, catalyzes the phosphorolytic breakdown of the N-glycosidic bond in the beta-(deoxy)ribonucleoside molecules, with the formation of the corresponding free purine bases and pentose-1-phosphate. Preferentially acts on 2'-deoxyinosine and inosine, and to a lesser extent on 2'-deoxyguanosine and guanosine. Has no activity towards adenosine or 2'-deoxyadenosine. In Anopheles gambiae (African malaria mosquito), this protein is Purine nucleoside phosphorylase.